A 255-amino-acid polypeptide reads, in one-letter code: 5-oxoprolinase subunit A (255 aa).

It belongs to the LamB/PxpA family. In terms of assembly, forms a complex composed of PxpA, PxpB and PxpC.

It carries out the reaction 5-oxo-L-proline + ATP + 2 H2O = L-glutamate + ADP + phosphate + H(+). Functionally, catalyzes the cleavage of 5-oxoproline to form L-glutamate coupled to the hydrolysis of ATP to ADP and inorganic phosphate. The protein is 5-oxoprolinase subunit A of Campylobacter jejuni subsp. doylei (strain ATCC BAA-1458 / RM4099 / 269.97).